We begin with the raw amino-acid sequence, 83 residues long: Small ribosomal subunit protein uS17 (83 aa).

It belongs to the universal ribosomal protein uS17 family. Part of the 30S ribosomal subunit.

One of the primary rRNA binding proteins, it binds specifically to the 5'-end of 16S ribosomal RNA. The protein is Small ribosomal subunit protein uS17 of Aliarcobacter butzleri (strain RM4018) (Arcobacter butzleri).